A 379-amino-acid polypeptide reads, in one-letter code: Glutamate 5-kinase (379 aa).

ATP is bound at residue Lys19. Substrate-binding residues include Ser59, Asp146, and Asn158. Position 178-179 (178-179) interacts with ATP; it reads TD. The PUA domain occupies 285–363; that stretch reads RGAVTVDAGA…SEFERLLGYV (79 aa).

This sequence belongs to the glutamate 5-kinase family.

Its subcellular location is the cytoplasm. The enzyme catalyses L-glutamate + ATP = L-glutamyl 5-phosphate + ADP. It participates in amino-acid biosynthesis; L-proline biosynthesis; L-glutamate 5-semialdehyde from L-glutamate: step 1/2. Its function is as follows. Catalyzes the transfer of a phosphate group to glutamate to form L-glutamate 5-phosphate. The polypeptide is Glutamate 5-kinase (Variovorax paradoxus (strain S110)).